The primary structure comprises 533 residues: SH3 and F-BAR domain-containing protein DDB_G0271676 (533 aa).

The 254-residue stretch at 5 to 258 folds into the F-BAR domain; sequence RQFSEDLWDK…GIESIDRERD (254 aa). Residues 76-186 adopt a coiled-coil conformation; sequence REQLELIGAL…ADKGDNEYRE (111 aa). Basic and acidic residues-rich tracts occupy residues 126 to 155 and 162 to 184; these read LKTAESNESKAKQNYEKLKRKQEEANEDLS and KEQKARKTLESATKAADKGDNEY. Disordered regions lie at residues 126–184 and 301–405; these read LKTA…DNEY and SRKS…INSN. 4 stretches are compositionally biased toward low complexity: residues 318–327, 340–360, 372–385, and 392–405; these read SIISSPQQPQ, NIIIQQHQQSNNNNNTNNNSN, PQQQQLPQPTQLNN, and SLSKNDSSNSINSN. SH3 domains lie at 406 to 468 and 476 to 533; these read SNGE…DSSD and VAGR…VQVI.

This Dictyostelium discoideum (Social amoeba) protein is SH3 and F-BAR domain-containing protein DDB_G0271676.